The sequence spans 269 residues: Small ribosomal subunit protein uS2 (269 aa).

Residues 235–269 (FDAKNPLKPQNYNTLNKRPYQDSPRKPSYQNQNQR) form a disordered region.

The protein belongs to the universal ribosomal protein uS2 family.

The chain is Small ribosomal subunit protein uS2 from Aster yellows witches'-broom phytoplasma (strain AYWB).